A 473-amino-acid chain; its full sequence is H(+)/Cl(-) exchange transporter ClcA (473 aa).

Over 1 to 32 the chain is Cytoplasmic; that stretch reads MNTDTPTFEAQQVVRLRRGDLIRRLLQRDKTP. A helical membrane pass occupies residues 33 to 69; the sequence is LAILLTAAVVGTVTGLIGVAFEKAVTWVQNLRIGALV. The Periplasmic segment spans residues 70–76; the sequence is QTADYAI. A helical membrane pass occupies residues 77 to 100; the sequence is LVWPLAFILSALLAMVGYFLVRKF. Residues 101–108 are Cytoplasmic-facing; it reads APEAGGSG. A Selectivity filter part_1 motif is present at residues 106–110; the sequence is GSGIP. Residue S107 participates in chloride binding. The helical intramembrane region spans 109–116; it reads IPEIEGAL. Topologically, residues 117–123 are cytoplasmic; it reads EELRPVR. Residues 124-141 traverse the membrane as a helical segment; sequence WWRVLPVKFVGGMGTLGA. The Periplasmic portion of the chain corresponds to 142–147; it reads GMVLGR. Residues 146–150 carry the Selectivity filter part_2 motif; it reads GREGP. A helical membrane pass occupies residues 148-166; that stretch reads EGPTVQIGGNIGRMVLDLF. Residues 167-176 are Cytoplasmic-facing; the sequence is RMRSAEARHT. Intramembrane regions (helical) lie at residues 177 to 189 and 193 to 201; these read LLAT…LSAA and PLAGILFII. Topologically, residues 202 to 214 are cytoplasmic; sequence EEMRPQFRYNLIS. A helical transmembrane segment spans residues 215-232; sequence IKAVFTGVIMSSIVFRIF. Topologically, residues 233 to 252 are periplasmic; that stretch reads NGEAPIIEVGKLSNAPVNTL. The chain crosses the membrane as a helical span at residues 253–281; sequence WLYLILGMIFGCVGPLFNHLVLRTQDMFQ. The Cytoplasmic segment spans residues 282–287; the sequence is RFHGGE. Residues 288 to 309 traverse the membrane as a helical segment; sequence IKKWVLMGGAIGGLCGILGLIE. The Periplasmic portion of the chain corresponds to 310-329; it reads PEAAGGGFNLIPIAAAGNYS. The helical transmembrane segment at 330-349 threads the bilayer; sequence VGLLLFIFIARVLTTLLCFS. Over 350 to 354 the chain is Cytoplasmic; the sequence is SGAPG. Positions 355–359 match the Selectivity filter part_3 motif; the sequence is GIFAP. A helical membrane pass occupies residues 355–376; that stretch reads GIFAPMLALGTLLGTAFGMAAA. Chloride-binding residues include I356 and F357. Residues 377-386 lie on the Periplasmic side of the membrane; that stretch reads ACFPQYHLEA. Positions 387-401 form an intramembrane region, helical; sequence GTFAIAGMGALLAAS. The segment at residues 402-404 is an intramembrane region (note=Loop between two helices); it reads VRA. The segment at residues 405-416 is an intramembrane region (helical); that stretch reads PLTGIVLVLEMT. An intramembrane region (note=Loop between two helices) is located at residues 417-421; that stretch reads DNYQL. A helical membrane pass occupies residues 422 to 438; sequence ILPMIITCLGATLLAQF. The Cytoplasmic segment spans residues 439-473; it reads MGGKPLYSTILARTLAKQDAEQAAKSQRSVAGENT. Y445 provides a ligand contact to chloride.

It belongs to the chloride channel (TC 2.A.49) family. ClcA subfamily. In terms of assembly, homodimer.

It localises to the cell inner membrane. It carries out the reaction 2 chloride(in) + H(+)(out) = 2 chloride(out) + H(+)(in). Proton-coupled chloride transporter. Functions as antiport system and exchanges two chloride ions for 1 proton. Probably acts as an electrical shunt for an outwardly-directed proton pump that is linked to amino acid decarboxylation, as part of the extreme acid resistance (XAR) response. The sequence is that of H(+)/Cl(-) exchange transporter ClcA from Citrobacter koseri (strain ATCC BAA-895 / CDC 4225-83 / SGSC4696).